The chain runs to 427 residues: Pectin acetylesterase 5 (427 aa).

Positions 1 to 35 (MAIPRFSSLLRCRKWAKSDWLVASIGCVLIVFFLS) are cleaved as a signal peptide. N-linked (GlcNAc...) asparagine glycosylation occurs at Asn173. Catalysis depends on charge relay system residues Ser209, Asp305, and His372. The N-linked (GlcNAc...) asparagine glycan is linked to Asn391.

Belongs to the pectinacetylesterase family.

Its subcellular location is the secreted. The protein resides in the cell wall. Functionally, hydrolyzes acetyl esters in homogalacturonan regions of pectin. In type I primary cell wall, galacturonic acid residues of pectin can be acetylated at the O-2 and O-3 positions. Decreasing the degree of acetylation of pectin gels in vitro alters their physical properties. The sequence is that of Pectin acetylesterase 5 from Arabidopsis thaliana (Mouse-ear cress).